A 553-amino-acid polypeptide reads, in one-letter code: Dihydroxy-acid dehydratase (553 aa).

Asp78 is a Mg(2+) binding site. Position 119 (Cys119) interacts with [2Fe-2S] cluster. Positions 120 and 121 each coordinate Mg(2+). Lys121 is modified (N6-carboxylysine). Cys192 serves as a coordination point for [2Fe-2S] cluster. Glu442 serves as a coordination point for Mg(2+). The active-site Proton acceptor is the Ser468.

The protein belongs to the IlvD/Edd family. Homodimer. Requires [2Fe-2S] cluster as cofactor. Mg(2+) is required as a cofactor.

It catalyses the reaction (2R)-2,3-dihydroxy-3-methylbutanoate = 3-methyl-2-oxobutanoate + H2O. The catalysed reaction is (2R,3R)-2,3-dihydroxy-3-methylpentanoate = (S)-3-methyl-2-oxopentanoate + H2O. It participates in amino-acid biosynthesis; L-isoleucine biosynthesis; L-isoleucine from 2-oxobutanoate: step 3/4. The protein operates within amino-acid biosynthesis; L-valine biosynthesis; L-valine from pyruvate: step 3/4. Functions in the biosynthesis of branched-chain amino acids. Catalyzes the dehydration of (2R,3R)-2,3-dihydroxy-3-methylpentanoate (2,3-dihydroxy-3-methylvalerate) into 2-oxo-3-methylpentanoate (2-oxo-3-methylvalerate) and of (2R)-2,3-dihydroxy-3-methylbutanoate (2,3-dihydroxyisovalerate) into 2-oxo-3-methylbutanoate (2-oxoisovalerate), the penultimate precursor to L-isoleucine and L-valine, respectively. The sequence is that of Dihydroxy-acid dehydratase from Campylobacter hominis (strain ATCC BAA-381 / DSM 21671 / CCUG 45161 / LMG 19568 / NCTC 13146 / CH001A).